Reading from the N-terminus, the 303-residue chain is uncharacterized protein (303 aa).

This is an uncharacterized protein from Magallana gigas (Pacific oyster).